Here is a 254-residue protein sequence, read N- to C-terminus: Diphthine synthase (254 aa).

Residues L11, D86, I89, 114 to 115, L166, L207, and H232 contribute to the S-adenosyl-L-methionine site; that span reads SV.

It belongs to the diphthine synthase family. As to quaternary structure, homodimer.

The enzyme catalyses 2-[(3S)-amino-3-carboxypropyl]-L-histidyl-[translation elongation factor 2] + 3 S-adenosyl-L-methionine = diphthine-[translation elongation factor 2] + 3 S-adenosyl-L-homocysteine + 3 H(+). It functions in the pathway protein modification; peptidyl-diphthamide biosynthesis. Functionally, S-adenosyl-L-methionine-dependent methyltransferase that catalyzes the trimethylation of the amino group of the modified target histidine residue in translation elongation factor 2 (EF-2), to form an intermediate called diphthine. The three successive methylation reactions represent the second step of diphthamide biosynthesis. This chain is Diphthine synthase, found in Sulfurisphaera tokodaii (strain DSM 16993 / JCM 10545 / NBRC 100140 / 7) (Sulfolobus tokodaii).